Consider the following 214-residue polypeptide: Cytochrome c biogenesis ATP-binding export protein CcmA (214 aa).

In terms of domain architecture, ABC transporter spans Leu8–Val212. Residue Gly40 to Thr47 participates in ATP binding.

This sequence belongs to the ABC transporter superfamily. CcmA exporter (TC 3.A.1.107) family. In terms of assembly, the complex is composed of two ATP-binding proteins (CcmA) and two transmembrane proteins (CcmB).

It is found in the cell inner membrane. The enzyme catalyses heme b(in) + ATP + H2O = heme b(out) + ADP + phosphate + H(+). Functionally, part of the ABC transporter complex CcmAB involved in the biogenesis of c-type cytochromes; once thought to export heme, this seems not to be the case, but its exact role is uncertain. Responsible for energy coupling to the transport system. This is Cytochrome c biogenesis ATP-binding export protein CcmA from Aromatoleum aromaticum (strain DSM 19018 / LMG 30748 / EbN1) (Azoarcus sp. (strain EbN1)).